Reading from the N-terminus, the 622-residue chain is Prolactin receptor (622 aa).

A signal peptide spans 1-24 (MKENVASATVFTLLLFLNTCLLNG). The Extracellular portion of the chain corresponds to 25-234 (QLPPGKPEIF…QIPSDFTMND (210 aa)). 2 consecutive Fibronectin type-III domains span residues 27–128 (PPGK…VQPD) and 129–229 (PPLE…IPSD). A disulfide bridge connects residues C36 and C46. N59 is a glycosylation site (N-linked (GlcNAc...) asparagine). An intrachain disulfide couples C75 to C86. N-linked (GlcNAc...) asparagine glycosylation occurs at N104. 2 residues coordinate Zn(2+): D211 and H212. A WSXWS motif motif is present at residues 215 to 219 (WSAWS). N233 is a glycosylation site (N-linked (GlcNAc...) asparagine). A helical transmembrane segment spans residues 235 to 258 (TTVWISVAVLSAVICLIIVWAVAL). The Cytoplasmic portion of the chain corresponds to 259 to 622 (KGYSMVTCIF…DPACFTHSFH (364 aa)). Residues 267–275 (IFPPVPGPK) carry the Box 1 motif motif. Disordered regions lie at residues 326–378 (MSVH…YDPE), 461–505 (SSQT…GSAK), and 520–545 (ALSLLPKQRENSGKPKKPGTPENNKE). The span at 466 to 486 (KSREEGKATQQREVESFHSET) shows a compositional bias: basic and acidic residues.

This sequence belongs to the type I cytokine receptor family. Type 1 subfamily. Homodimer upon hormone binding. Interacts with SMARCA1. Interacts with GH1. Interacts with CSH. Interacts with NEK3 and VAV2 and this interaction is prolactin-dependent. In terms of tissue distribution, expressed in breast, placenta, kidney, liver and pancreas.

The protein resides in the membrane. Its subcellular location is the secreted. In terms of biological role, this is a receptor for the anterior pituitary hormone prolactin (PRL). Acts as a prosurvival factor for spermatozoa by inhibiting sperm capacitation through suppression of SRC kinase activation and stimulation of AKT. Isoform 4 is unable to transduce prolactin signaling. Isoform 6 is unable to transduce prolactin signaling. In Homo sapiens (Human), this protein is Prolactin receptor (PRLR).